The primary structure comprises 217 residues: Oxygen regulatory protein NreC (217 aa).

The Response regulatory domain maps to 2–119 (KIVIADDHAV…QLLLAVRTVY (118 aa)). D53 is modified (4-aspartylphosphate). The HTH luxR-type domain occupies 148 to 213 (TNDPFKILSK…ELVEYALKKK (66 aa)). A DNA-binding region (H-T-H motif) is located at residues 172–191 (NKDIAEKLFVSVKTVEAHKT).

Phosphorylated by NreB.

The protein resides in the cytoplasm. Functionally, member of the two-component regulatory system NreB/NreC involved in the control of dissimilatory nitrate/nitrite reduction in response to oxygen. Phosphorylated NreC binds to a GC-rich palindromic sequence at the promoters of the nitrate (narGHJI) and nitrite (nir) reductase operons, as well as the putative nitrate transporter gene narT, and activates their expression. This is Oxygen regulatory protein NreC (nreC) from Staphylococcus haemolyticus (strain JCSC1435).